The following is a 509-amino-acid chain: Protein MAIN-LIKE 1 (509 aa).

The segment at 477-509 (GYGKRRRRNEHTPTPNNGGGNDISSLLLQKEDS) is disordered. The segment covering 488–503 (TPTPNNGGGNDISSLL) has biased composition (polar residues).

Expressed in root tips, the shoot apical meristem (SAM), leaves, mature flowers and embryos.

It localises to the nucleus. Acts as an important factor for cell fate determination and maintenance throughout plant development. Required for the organization of the root apical meristem (RAM) and the shoot apical meristem (SAM). Required to maintain genome stability and cell division activity in meristematic cells. This Arabidopsis thaliana (Mouse-ear cress) protein is Protein MAIN-LIKE 1.